We begin with the raw amino-acid sequence, 420 residues long: UDP-N-acetylglucosamine 1-carboxyvinyltransferase 2 (420 aa).

22-23 is a binding site for phosphoenolpyruvate; that stretch reads KN. A UDP-N-acetyl-alpha-D-glucosamine-binding site is contributed by Arg-92. Catalysis depends on Cys-116, which acts as the Proton donor. Cys-116 is modified (2-(S-cysteinyl)pyruvic acid O-phosphothioketal). Residues 121–125, Asp-307, and Ile-329 each bind UDP-N-acetyl-alpha-D-glucosamine; that span reads RPIDL.

The protein belongs to the EPSP synthase family. MurA subfamily.

It is found in the cytoplasm. The enzyme catalyses phosphoenolpyruvate + UDP-N-acetyl-alpha-D-glucosamine = UDP-N-acetyl-3-O-(1-carboxyvinyl)-alpha-D-glucosamine + phosphate. The protein operates within cell wall biogenesis; peptidoglycan biosynthesis. Functionally, cell wall formation. Adds enolpyruvyl to UDP-N-acetylglucosamine. This chain is UDP-N-acetylglucosamine 1-carboxyvinyltransferase 2, found in Streptococcus thermophilus (strain CNRZ 1066).